A 28-amino-acid polypeptide reads, in one-letter code: Trypsin inhibitor 4 (28 aa).

3 disulfide bridges follow: C2–C19, C9–C21, and C15–C27.

The protein belongs to the protease inhibitor I7 (squash-type serine protease inhibitor) family.

It is found in the secreted. In terms of biological role, inhibits trypsin. The sequence is that of Trypsin inhibitor 4 from Luffa aegyptiaca (Sponge gourd).